Consider the following 248-residue polypeptide: Ubiquinone biosynthesis O-methyltransferase (248 aa).

Residues R41, G72, D93, and M136 each coordinate S-adenosyl-L-methionine.

It belongs to the methyltransferase superfamily. UbiG/COQ3 family.

The enzyme catalyses a 3-demethylubiquinol + S-adenosyl-L-methionine = a ubiquinol + S-adenosyl-L-homocysteine + H(+). It carries out the reaction a 3-(all-trans-polyprenyl)benzene-1,2-diol + S-adenosyl-L-methionine = a 2-methoxy-6-(all-trans-polyprenyl)phenol + S-adenosyl-L-homocysteine + H(+). It participates in cofactor biosynthesis; ubiquinone biosynthesis. Functionally, O-methyltransferase that catalyzes the 2 O-methylation steps in the ubiquinone biosynthetic pathway. In Rhizobium johnstonii (strain DSM 114642 / LMG 32736 / 3841) (Rhizobium leguminosarum bv. viciae), this protein is Ubiquinone biosynthesis O-methyltransferase.